Consider the following 792-residue polypeptide: LPS-assembly protein LptD (792 aa).

The N-terminal stretch at 1-22 is a signal peptide; that stretch reads MYRVLRLLPLPLSVAISLSALA.

This sequence belongs to the LptD family. Component of the lipopolysaccharide transport and assembly complex. Interacts with LptE and LptA.

It is found in the cell outer membrane. Its function is as follows. Together with LptE, is involved in the assembly of lipopolysaccharide (LPS) at the surface of the outer membrane. The chain is LPS-assembly protein LptD from Xylella fastidiosa (strain Temecula1 / ATCC 700964).